The primary structure comprises 626 residues: Zinc finger protein 471 (626 aa).

The KRAB domain occupies 14–85 (VTFKDVAIDF…TSEMTRSPFS (72 aa)). C2H2-type zinc fingers lie at residues 206-228 (FKCN…FRIH), 234-256 (YACE…HRTH), 262-284 (FECK…QRIH), 290-312 (YKCK…QRIH), 318-340 (YECK…QRCH), 346-369 (YECI…RSYH), 375-397 (FNCI…RRIH), 403-425 (YKCG…QRIH), 431-453 (YECD…QRVH), 459-481 (YECK…LRIH), 487-509 (YECK…QRIH), 515-537 (YECI…QKTH), 543-565 (YECN…QRIH), 571-593 (YKCT…QRLH), and 599-621 (YQCF…QRSH).

This sequence belongs to the krueppel C2H2-type zinc-finger protein family.

Its subcellular location is the nucleus. May be involved in transcriptional regulation. This chain is Zinc finger protein 471 (ZNF471), found in Homo sapiens (Human).